We begin with the raw amino-acid sequence, 577 residues long: Isocitrate dehydrogenase kinase/phosphatase (577 aa).

ATP-binding positions include 318-324 (APGVRGM) and K339. D374 is a catalytic residue.

The protein belongs to the AceK family.

The protein resides in the cytoplasm. The catalysed reaction is L-seryl-[isocitrate dehydrogenase] + ATP = O-phospho-L-seryl-[isocitrate dehydrogenase] + ADP + H(+). Functionally, bifunctional enzyme which can phosphorylate or dephosphorylate isocitrate dehydrogenase (IDH) on a specific serine residue. This is a regulatory mechanism which enables bacteria to bypass the Krebs cycle via the glyoxylate shunt in response to the source of carbon. When bacteria are grown on glucose, IDH is fully active and unphosphorylated, but when grown on acetate or ethanol, the activity of IDH declines drastically concomitant with its phosphorylation. This chain is Isocitrate dehydrogenase kinase/phosphatase, found in Pseudomonas aeruginosa (strain LESB58).